The primary structure comprises 131 residues: Small ribosomal subunit protein uS8 (131 aa).

Belongs to the universal ribosomal protein uS8 family. In terms of assembly, part of the 30S ribosomal subunit. Contacts proteins S5 and S12.

In terms of biological role, one of the primary rRNA binding proteins, it binds directly to 16S rRNA central domain where it helps coordinate assembly of the platform of the 30S subunit. The chain is Small ribosomal subunit protein uS8 from Chromobacterium violaceum (strain ATCC 12472 / DSM 30191 / JCM 1249 / CCUG 213 / NBRC 12614 / NCIMB 9131 / NCTC 9757 / MK).